We begin with the raw amino-acid sequence, 343 residues long: Ribosomal RNA small subunit methyltransferase C (343 aa).

This sequence belongs to the methyltransferase superfamily. RsmC family. In terms of assembly, monomer.

The protein localises to the cytoplasm. It carries out the reaction guanosine(1207) in 16S rRNA + S-adenosyl-L-methionine = N(2)-methylguanosine(1207) in 16S rRNA + S-adenosyl-L-homocysteine + H(+). In terms of biological role, specifically methylates the guanine in position 1207 of 16S rRNA in the 30S particle. The sequence is that of Ribosomal RNA small subunit methyltransferase C from Escherichia coli O17:K52:H18 (strain UMN026 / ExPEC).